A 329-amino-acid chain; its full sequence is Ketol-acid reductoisomerase (NADP(+)) (329 aa).

The KARI N-terminal Rossmann domain maps to 2-182; the sequence is TQLFYDTDAD…GGTRAGILET (181 aa). NADP(+)-binding positions include 25-28, S51, S53, and 83-86; these read YGSQ and DEFQ. Residue H108 is part of the active site. An NADP(+)-binding site is contributed by G134. The region spanning 183–328 is the KARI C-terminal knotted domain; sequence NFKEETETDL…KSLRSMFSWL (146 aa). 4 residues coordinate Mg(2+): D191, E195, E227, and E231. S252 lines the substrate pocket.

The protein belongs to the ketol-acid reductoisomerase family. Requires Mg(2+) as cofactor.

It carries out the reaction (2R)-2,3-dihydroxy-3-methylbutanoate + NADP(+) = (2S)-2-acetolactate + NADPH + H(+). It catalyses the reaction (2R,3R)-2,3-dihydroxy-3-methylpentanoate + NADP(+) = (S)-2-ethyl-2-hydroxy-3-oxobutanoate + NADPH + H(+). Its pathway is amino-acid biosynthesis; L-isoleucine biosynthesis; L-isoleucine from 2-oxobutanoate: step 2/4. It functions in the pathway amino-acid biosynthesis; L-valine biosynthesis; L-valine from pyruvate: step 2/4. Its function is as follows. Involved in the biosynthesis of branched-chain amino acids (BCAA). Catalyzes an alkyl-migration followed by a ketol-acid reduction of (S)-2-acetolactate (S2AL) to yield (R)-2,3-dihydroxy-isovalerate. In the isomerase reaction, S2AL is rearranged via a Mg-dependent methyl migration to produce 3-hydroxy-3-methyl-2-ketobutyrate (HMKB). In the reductase reaction, this 2-ketoacid undergoes a metal-dependent reduction by NADPH to yield (R)-2,3-dihydroxy-isovalerate. The protein is Ketol-acid reductoisomerase (NADP(+)) of Prochlorococcus marinus (strain MIT 9301).